A 1200-amino-acid polypeptide reads, in one-letter code: uncharacterized protein (1200 aa).

Disordered stretches follow at residues 282–302, 323–372, 392–491, 510–568, and 1056–1200; these read SQES…GCTS, LSEA…PQGS, SQEP…KASL, RAKS…RIGA, and SCPE…LASL. Residues 420 to 435 are compositionally biased toward low complexity; it reads ASSPRLSPASPAAAAS. Residues 437 to 448 show a composition bias toward basic and acidic residues; it reads TKIEVKTKERNG. The span at 518 to 527 shows a compositional bias: polar residues; sequence GTTQTKTSGP. Residues 1137-1153 show a composition bias toward basic and acidic residues; that stretch reads EDGKGSHKLPDPAREHL. Residues 1160 to 1171 show a composition bias toward low complexity; it reads RQQPPRQSQVPR. A compositionally biased stretch (polar residues) spans 1175–1200; the sequence is GSFSSEGTDSQTSLEDSPQTSPLASL.

This is an uncharacterized protein from Homo sapiens (Human).